Here is a 567-residue protein sequence, read N- to C-terminus: Geranylgeranyl transferase type-2 subunit alpha (567 aa).

PFTA repeat units follow at residues 44–78, 88–122, 124–158, 159–193, 207–241, and 363–397; these read LDES…QLET, LVKA…RLPE, NWTR…QAAV, PPAE…QLHP, VLLK…RADP, and VLQS…ALDP. Ser98 carries the phosphoserine modification. LRR repeat units follow at residues 442–463, 464–486, 487–508, 509–530, and 534–555; these read EVRV…EQLL, LVTH…AALR, CLEV…TNLP, RLQE…QPLA, and RLVL…LEQL.

Belongs to the protein prenyltransferase subunit alpha family. Heterotrimer composed of RABGGTA, RABGGTB and CHM; within this trimer, RABGGTA and RABGGTB form the catalytic component B, while CHM (component A) mediates peptide substrate binding. The Rab GGTase dimer (RGGT) interacts with CHM (component A) prior to Rab protein binding; the association is stabilized by geranylgeranyl pyrophosphate (GGpp). The CHM:RGGT:Rab complex is destabilized by GGpp. Interacts with non-phosphorylated form of RAB8A; phosphorylation of RAB8A at 'Thr-72' disrupts this interaction.

It catalyses the reaction geranylgeranyl diphosphate + L-cysteinyl-[protein] = S-geranylgeranyl-L-cysteinyl-[protein] + diphosphate. The enzymatic reaction requires the aid of a Rab escort protein (also called component A), such as CHM. Its function is as follows. Catalyzes the transfer of a geranylgeranyl moiety from geranylgeranyl diphosphate to both cysteines of Rab proteins with the C-terminal sequence -XXCC, -XCXC and -CCXX, such as RAB1A, RAB3A, RAB5A and RAB7A. This chain is Geranylgeranyl transferase type-2 subunit alpha (RABGGTA), found in Homo sapiens (Human).